Here is a 165-residue protein sequence, read N- to C-terminus: ATP synthase subunit delta, mitochondrial (165 aa).

A mitochondrion-targeting transit peptide spans M1 to Y27.

Belongs to the ATPase epsilon chain family. F-type ATPases have 2 components, CF(1) - the catalytic core - and CF(0) - the membrane proton channel. CF(1) has five subunits: alpha(3), beta(3), gamma(1), delta(1), epsilon(1). CF(0) has three main subunits: a, b and c.

It localises to the mitochondrion. It is found in the mitochondrion inner membrane. Functionally, mitochondrial membrane ATP synthase (F(1)F(0) ATP synthase or Complex V) produces ATP from ADP in the presence of a proton gradient across the membrane which is generated by electron transport complexes of the respiratory chain. F-type ATPases consist of two structural domains, F(1) - containing the extramembraneous catalytic core, and F(0) - containing the membrane proton channel, linked together by a central stalk and a peripheral stalk. During catalysis, ATP turnover in the catalytic domain of F(1) is coupled via a rotary mechanism of the central stalk subunits to proton translocation. Part of the complex F(1) domain and of the central stalk which is part of the complex rotary element. Rotation of the central stalk against the surrounding alpha(3)beta(3) subunits leads to hydrolysis of ATP in three separate catalytic sites on the beta subunits. The sequence is that of ATP synthase subunit delta, mitochondrial (des) from Neurospora crassa (strain ATCC 24698 / 74-OR23-1A / CBS 708.71 / DSM 1257 / FGSC 987).